Reading from the N-terminus, the 102-residue chain is NADH-quinone oxidoreductase subunit K (102 aa).

Helical transmembrane passes span 6 to 26 (LEHGLAVAGILFCLGLVGLMV), 30 to 50 (ILFVLMSLEIMMNAAALAFIV), and 62 to 82 (VMFILVISLAAAEASIGLAIL).

Belongs to the complex I subunit 4L family. NDH-1 is composed of 13 different subunits. Subunits NuoA, H, J, K, L, M, N constitute the membrane sector of the complex.

The protein resides in the cell inner membrane. It catalyses the reaction a quinone + NADH + 5 H(+)(in) = a quinol + NAD(+) + 4 H(+)(out). NDH-1 shuttles electrons from NADH, via FMN and iron-sulfur (Fe-S) centers, to quinones in the respiratory chain. The immediate electron acceptor for the enzyme in this species is believed to be ubiquinone. Couples the redox reaction to proton translocation (for every two electrons transferred, four hydrogen ions are translocated across the cytoplasmic membrane), and thus conserves the redox energy in a proton gradient. The chain is NADH-quinone oxidoreductase subunit K from Pseudomonas fluorescens (strain SBW25).